Consider the following 160-residue polypeptide: SsrA-binding protein (160 aa).

The protein belongs to the SmpB family.

Its subcellular location is the cytoplasm. Required for rescue of stalled ribosomes mediated by trans-translation. Binds to transfer-messenger RNA (tmRNA), required for stable association of tmRNA with ribosomes. tmRNA and SmpB together mimic tRNA shape, replacing the anticodon stem-loop with SmpB. tmRNA is encoded by the ssrA gene; the 2 termini fold to resemble tRNA(Ala) and it encodes a 'tag peptide', a short internal open reading frame. During trans-translation Ala-aminoacylated tmRNA acts like a tRNA, entering the A-site of stalled ribosomes, displacing the stalled mRNA. The ribosome then switches to translate the ORF on the tmRNA; the nascent peptide is terminated with the 'tag peptide' encoded by the tmRNA and targeted for degradation. The ribosome is freed to recommence translation, which seems to be the essential function of trans-translation. This Enterobacter sp. (strain 638) protein is SsrA-binding protein.